The following is a 337-amino-acid chain: Dihydroorotate dehydrogenase (quinone) (337 aa).

Residues 62–66 (AGLDK) and Thr86 contribute to the FMN site. Lys66 lines the substrate pocket. Position 111 to 115 (111 to 115 (NRFGF)) interacts with substrate. FMN is bound by residues Asn139 and Asn172. Residue Asn172 coordinates substrate. Ser175 serves as the catalytic Nucleophile. A substrate-binding site is contributed by Asn177. Residues Lys217 and Thr245 each contribute to the FMN site. Substrate is bound at residue 246–247 (NT). Residues Gly268, Gly297, and 318 to 319 (YS) contribute to the FMN site.

This sequence belongs to the dihydroorotate dehydrogenase family. Type 2 subfamily. As to quaternary structure, monomer. FMN serves as cofactor.

It localises to the cell membrane. The enzyme catalyses (S)-dihydroorotate + a quinone = orotate + a quinol. It functions in the pathway pyrimidine metabolism; UMP biosynthesis via de novo pathway; orotate from (S)-dihydroorotate (quinone route): step 1/1. Functionally, catalyzes the conversion of dihydroorotate to orotate with quinone as electron acceptor. The sequence is that of Dihydroorotate dehydrogenase (quinone) from Methylobacillus flagellatus (strain ATCC 51484 / DSM 6875 / VKM B-1610 / KT).